Consider the following 481-residue polypeptide: Abietadienol/abietadienal oxidase (481 aa).

Residues 2-22 form a helical membrane-spanning segment; it reads ADQISLLLVVFTAAVALLHLI. Heme is bound at residue Cys430.

It belongs to the cytochrome P450 family. Heme serves as cofactor. In terms of tissue distribution, expressed in young tissues such as flushing buds and green bark tissues. Lower levels in mature needles and bark.

The protein localises to the membrane. The enzyme catalyses abieta-7,13-dien-18-ol + 2 reduced [NADPH--hemoprotein reductase] + 2 O2 = abieta-7,13-dien-18-oate + 2 oxidized [NADPH--hemoprotein reductase] + 3 H2O + 3 H(+). Functionally, multifunctional and multisubstrate cytochrome P450 that oxidizes the respective carbon 18 of abietadienol, abietadienal, levopimaradienol, isopimara-7,15-dienol, isopimara-7,15-dienal, dehydroabietadienol, and dehydroabietadienal. This Pinus taeda (Loblolly pine) protein is Abietadienol/abietadienal oxidase (CYP720B1).